Consider the following 51-residue polypeptide: Ribosome biogenesis protein Nop10 (51 aa).

The protein belongs to the NOP10 family.

Its function is as follows. Involved in ribosome biogenesis; more specifically in 18S rRNA pseudouridylation and in cleavage of pre-rRNA. This chain is Ribosome biogenesis protein Nop10, found in Methanococcus aeolicus (strain ATCC BAA-1280 / DSM 17508 / OCM 812 / Nankai-3).